A 242-amino-acid polypeptide reads, in one-letter code: E3 ubiquitin-protein ligase AIRP2 (242 aa).

Residues 146–184 (CGICLEIRNKVVLPTCNHSMCINCYRNWRARSQSCPFCR) form an RING-type zinc finger.

Interacts with ATP1/SDIRIP1. In terms of tissue distribution, expressed in germinating seeds, flower organs and siliques.

The protein localises to the cytoplasm. It localises to the cytosol. The enzyme catalyses S-ubiquitinyl-[E2 ubiquitin-conjugating enzyme]-L-cysteine + [acceptor protein]-L-lysine = [E2 ubiquitin-conjugating enzyme]-L-cysteine + N(6)-ubiquitinyl-[acceptor protein]-L-lysine.. Possesses E3 ubiquitin-protein ligase activity in vitro when associated with the E2 enzyme UBC8 in vitro. Plays combinatory roles with AIRP1 in the positive regulation of the abscisic acid-mediated drought stress response. Plays a positive role in abscisic acid- and high salinity-regulated seed germination through the ubiquitin-proteasome-dependent down-regulation of ATP1/SDIRIP1. The sequence is that of E3 ubiquitin-protein ligase AIRP2 from Arabidopsis thaliana (Mouse-ear cress).